A 524-amino-acid polypeptide reads, in one-letter code: Dihydromonacolin L monooxygenase mokC (524 aa).

Over 1–25 (MTVPTDTVSRRLQSLAWSDIKQHAP) the chain is Cytoplasmic. A helical; Signal-anchor for type II membrane protein membrane pass occupies residues 26–47 (WLPSSRTLVSGFLCLILLQILY). Over 48–524 (SRGRKSDLRV…LMMRRRDEDL (477 aa)) the chain is Lumenal. N-linked (GlcNAc...) asparagine glycosylation is found at N396 and N401. C467 is a binding site for heme.

This sequence belongs to the cytochrome P450 family. It depends on heme as a cofactor.

Its subcellular location is the endoplasmic reticulum membrane. It catalyses the reaction dihydromonacolin L carboxylate + reduced [NADPH--hemoprotein reductase] + O2 = monacolin L carboxylate + oxidized [NADPH--hemoprotein reductase] + 2 H2O + H(+). The enzyme catalyses monacolin L carboxylate + reduced [NADPH--hemoprotein reductase] + O2 = monacolin J carboxylate + oxidized [NADPH--hemoprotein reductase] + H2O + H(+). It participates in polyketide biosynthesis; lovastatin biosynthesis. Cytochrome P450 monooxygenase; part of the gene cluster that mediates the biosynthesis of monakolin K, also known as lovastatin, and which acts as a potent competitive inhibitor of HMG-CoA reductase. Monakolin K biosynthesis is performed in two stages. The first stage is catalyzed by the nonaketide synthase mokA, which belongs to type I polyketide synthases and catalyzes the iterative nine-step formation of the polyketide. This PKS stage is completed by the action of dehydrogenase mokE, which catalyzes the NADPH-dependent reduction of the unsaturated tetra-, penta- and heptaketide intermediates that arise during the mokA-mediated biosynthesis of the nonaketide chain and leads to dihydromonacolin L. Covalently bound dihydromonacolin L is released from mokA by the mokD esterase. Conversion of dihydromonacolin L into monacolin L and then monacolin J is subsequently performed with the participation of molecular oxygen and P450 monoogygenase mokC. Finally, mokF performs the conversion of monacoline J to monacoline K through the addition of the side-chain diketide moiety (2R)-2-methylbutanoate produced by the diketide synthase mokB. This is Dihydromonacolin L monooxygenase mokC from Monascus pilosus (Red mold).